The chain runs to 240 residues: Methylthioribulose-1-phosphate dehydratase (240 aa).

C100 contributes to the substrate binding site. The Zn(2+) site is built by H117 and H119. E146 serves as the catalytic Proton donor/acceptor. Residue H202 participates in Zn(2+) binding.

Belongs to the aldolase class II family. MtnB subfamily. It depends on Zn(2+) as a cofactor.

Its subcellular location is the cytoplasm. It carries out the reaction 5-(methylsulfanyl)-D-ribulose 1-phosphate = 5-methylsulfanyl-2,3-dioxopentyl phosphate + H2O. It functions in the pathway amino-acid biosynthesis; L-methionine biosynthesis via salvage pathway; L-methionine from S-methyl-5-thio-alpha-D-ribose 1-phosphate: step 2/6. Catalyzes the dehydration of methylthioribulose-1-phosphate (MTRu-1-P) into 2,3-diketo-5-methylthiopentyl-1-phosphate (DK-MTP-1-P). In Emericella nidulans (strain FGSC A4 / ATCC 38163 / CBS 112.46 / NRRL 194 / M139) (Aspergillus nidulans), this protein is Methylthioribulose-1-phosphate dehydratase.